The following is a 419-amino-acid chain: CinA-like protein (419 aa).

It belongs to the CinA family.

The polypeptide is CinA-like protein (Leptospira borgpetersenii serovar Hardjo-bovis (strain JB197)).